The sequence spans 2210 residues: Filamin-A (2210 aa).

Calponin-homology (CH) domains lie at 15–120 (KIQQ…LHYS) and 139–242 (HTPK…NSKL). Filamin repeat units lie at residues 249 to 347 (RPKT…PVKV), 349 to 447 (GHAG…PVKV), 448 to 544 (APLS…EVKV), 545 to 635 (GPKK…IAQI), 638 to 734 (RTDF…RVYV), 735 to 831 (GVPV…VVVE), 832 to 929 (QTVD…VVNV), 930 to 1022 (KSGC…RVLV), 1023 to 1121 (EETV…VMTV), 1122 to 1217 (FPKS…KLEA), 1218 to 1312 (FPTG…SIKA), 1322 to 1423 (SEYI…KFHV), 1424 to 1515 (DSIT…FAKI), 1516 to 1603 (TGEG…KVTV), 1606 to 1698 (REVG…TVKV), 1699 to 1796 (AGEG…QFTV), 1799 to 1891 (LRDS…KVYV), 1893 to 1986 (PDAG…RIKV), 1988 to 2079 (KDVA…KVNA), and 2116 to 2210 (TFKS…QIDV).

It belongs to the filamin family. Interacts with Ten-m. In terms of tissue distribution, germline-specific in females (at protein level). Expressed in ovary.

Its subcellular location is the cytoplasm. The protein localises to the cytoskeleton. The protein resides in the cell membrane. Functionally, involved in the germline ring canal formation. May tether actin microfilament within the ovarian ring canal to the cell membrane. Contributes to actin microfilaments organization. The sequence is that of Filamin-A (cher) from Drosophila melanogaster (Fruit fly).